The sequence spans 267 residues: MEMO1 family protein MM_1761 (267 aa).

Belongs to the MEMO1 family.

This chain is MEMO1 family protein MM_1761, found in Methanosarcina mazei (strain ATCC BAA-159 / DSM 3647 / Goe1 / Go1 / JCM 11833 / OCM 88) (Methanosarcina frisia).